Here is a 156-residue protein sequence, read N- to C-terminus: Small ribosomal subunit protein uS7 (156 aa).

This sequence belongs to the universal ribosomal protein uS7 family. In terms of assembly, part of the 30S ribosomal subunit. Contacts proteins S9 and S11.

In terms of biological role, one of the primary rRNA binding proteins, it binds directly to 16S rRNA where it nucleates assembly of the head domain of the 30S subunit. Is located at the subunit interface close to the decoding center, probably blocks exit of the E-site tRNA. This is Small ribosomal subunit protein uS7 from Streptococcus agalactiae serotype Ia (strain ATCC 27591 / A909 / CDC SS700).